The chain runs to 298 residues: MTDIAFLGLGNMGGPMAANLLKAGHRVNVFDLQPKAVLGLVEQGAQGADSALQCCEGAEVVISMLPAGQHVESLYLGDDGLLARVAGKPLLIDCSTIAPETARKVAEAAAAKGLTLLDAPVSGGVGGARAGTLSFIVGGPAEGFARARPVLENMGRNIFHAGDHGAGQVAKICNNMLLGILMAGTAEALALGVKNGLDPAVLSEVMKQSSGGNWALNLYNPWPGVMPQAPASNGYAGGFQVRLMNKDLGLALANAQAVQASTPLGALARNLFSLHAQADAEHEGLDFSSIQKLYRGKD.

NAD(+) contacts are provided by residues 2 to 30, 65 to 66, and threonine 96; these read TDIAFLGLGNMGGPMAANLLKAGHRVNVF and LP. The active site involves lysine 171. Residue lysine 246 participates in NAD(+) binding.

This sequence belongs to the HIBADH-related family.

The enzyme catalyses 3-hydroxy-2-methylpropanoate + NAD(+) = 2-methyl-3-oxopropanoate + NADH + H(+). The protein operates within amino-acid degradation; L-valine degradation. This is 3-hydroxyisobutyrate dehydrogenase from Pseudomonas aeruginosa (strain ATCC 15692 / DSM 22644 / CIP 104116 / JCM 14847 / LMG 12228 / 1C / PRS 101 / PAO1).